Here is a 296-residue protein sequence, read N- to C-terminus: UDP-N-acetylenolpyruvoylglucosamine reductase (296 aa).

The FAD-binding PCMH-type domain maps to 26–191; it reads RIGGPANYFK…LSATFRLSRN (166 aa). Arg170 is a catalytic residue. The Proton donor role is filled by Cys218. Glu287 is a catalytic residue.

It belongs to the MurB family. It depends on FAD as a cofactor.

The protein localises to the cytoplasm. The enzyme catalyses UDP-N-acetyl-alpha-D-muramate + NADP(+) = UDP-N-acetyl-3-O-(1-carboxyvinyl)-alpha-D-glucosamine + NADPH + H(+). It functions in the pathway cell wall biogenesis; peptidoglycan biosynthesis. Cell wall formation. The protein is UDP-N-acetylenolpyruvoylglucosamine reductase of Chlamydia abortus (strain DSM 27085 / S26/3) (Chlamydophila abortus).